We begin with the raw amino-acid sequence, 474 residues long: Sialyltransferase-like protein 1 (474 aa).

Residues 1–14 are Cytoplasmic-facing; the sequence is MRSHQAGRKLPLLQ. Residues 15–35 form a helical; Signal-anchor for type II membrane protein membrane-spanning segment; it reads LLGCVAVFSVFVFTIQSSFFA. The Lumenal segment spans residues 36–474; it reads DNNRKLDLQP…CVRHPLKLDT (439 aa). N-linked (GlcNAc...) asparagine glycosylation is found at asparagine 88, asparagine 120, asparagine 155, and asparagine 243. The interval 376 to 421 is disordered; that stretch reads RLQRSQQPTSSKRDGSGQFGNCKVWGDADPTKGPVSGSPDMSETRK.

Belongs to the glycosyltransferase 29 family. In terms of tissue distribution, highly expressed in inflorescences and siliques and at lower levels in roots, leaves and stems.

The protein resides in the golgi apparatus membrane. In terms of biological role, required for normal pollen grain germination and pollen tube growth. May not be required for pollen development and female gametophytic function. The protein is Sialyltransferase-like protein 1 of Arabidopsis thaliana (Mouse-ear cress).